The sequence spans 204 residues: HTH-type transcriptional repressor KstR (204 aa).

The HTH tetR-type domain maps to 18-78 (RERRKRILDA…SALGREFERI (61 aa)). Residues 41-60 (QMRAVAERADVAVGTLYRYF) constitute a DNA-binding region (H-T-H motif).

In terms of assembly, homodimer.

Controls the expression of genes used for utilizing diverse lipids as energy sources. The polypeptide is HTH-type transcriptional repressor KstR (kstR) (Mycolicibacterium smegmatis (strain ATCC 700084 / mc(2)155) (Mycobacterium smegmatis)).